Reading from the N-terminus, the 340-residue chain is Agmatinase, mitochondrial (340 aa).

Residues histidine 150, aspartate 173, histidine 175, aspartate 177, aspartate 264, and aspartate 266 each contribute to the Mn(2+) site.

It belongs to the arginase family. Agmatinase subfamily. Mn(2+) is required as a cofactor.

Its subcellular location is the mitochondrion. The catalysed reaction is agmatine + H2O = urea + putrescine. The protein operates within amine and polyamine biosynthesis; putrescine biosynthesis via agmatine pathway; putrescine from agmatine: step 1/1. The protein is Agmatinase, mitochondrial (AGMAT) of Gallus gallus (Chicken).